A 604-amino-acid chain; its full sequence is Glutamyl-tRNA(Gln) amidotransferase subunit B, mitochondrial (604 aa).

A mitochondrion-targeting transit peptide spans 1 to 48 (MIRQCLSRRGAYSRYRLAARGVELAEPFHHQSSRPQGRRNWSSSPRCS). Residues 28 to 57 (FHHQSSRPQGRRNWSSSPRCSLDIRTDTPR) form a disordered region. The segment covering 33–46 (SRPQGRRNWSSSPR) has biased composition (polar residues).

Belongs to the GatB/GatE family. GatB subfamily. As to quaternary structure, subunit of the heterotrimeric GatCAB amidotransferase (AdT) complex, composed of A, B and C subunits.

It localises to the mitochondrion. The catalysed reaction is L-glutamyl-tRNA(Gln) + L-glutamine + ATP + H2O = L-glutaminyl-tRNA(Gln) + L-glutamate + ADP + phosphate + H(+). Allows the formation of correctly charged Gln-tRNA(Gln) through the transamidation of misacylated Glu-tRNA(Gln) in the mitochondria. The reaction takes place in the presence of glutamine and ATP through an activated gamma-phospho-Glu-tRNA(Gln). In Blastomyces gilchristii (strain SLH14081) (Blastomyces dermatitidis), this protein is Glutamyl-tRNA(Gln) amidotransferase subunit B, mitochondrial.